A 485-amino-acid chain; its full sequence is Cysteine--tRNA ligase (485 aa).

Cys29 is a binding site for Zn(2+). Residues 31–41 (ATVQGMPHVGH) carry the 'HIGH' region motif. Positions 174 to 198 (QRVEDMQDAPDADPRGKRDPHDFAL) are disordered. Positions 185-197 (ADPRGKRDPHDFA) are enriched in basic and acidic residues. Residues Cys227, His252, and Glu256 each coordinate Zn(2+). Residues 283 to 287 (KMSKS) carry the 'KMSKS' region motif. Residue Lys286 coordinates ATP.

The protein belongs to the class-I aminoacyl-tRNA synthetase family. Monomer. It depends on Zn(2+) as a cofactor.

It localises to the cytoplasm. It carries out the reaction tRNA(Cys) + L-cysteine + ATP = L-cysteinyl-tRNA(Cys) + AMP + diphosphate. The sequence is that of Cysteine--tRNA ligase from Micrococcus luteus (strain ATCC 4698 / DSM 20030 / JCM 1464 / CCM 169 / CCUG 5858 / IAM 1056 / NBRC 3333 / NCIMB 9278 / NCTC 2665 / VKM Ac-2230) (Micrococcus lysodeikticus).